Reading from the N-terminus, the 651-residue chain is UvrABC system protein B (651 aa).

One can recognise a Helicase ATP-binding domain in the interval 25 to 178 (RGISCGAKEQ…CQLQERLVEL (154 aa)). Residue 38-45 (GVTGSGKT) participates in ATP binding. The Beta-hairpin motif lies at 91–114 (YYDYYQPEAYIPQSDVYIEKDALI). In terms of domain architecture, Helicase C-terminal spans 427–591 (DGQIHDVMCE…IVPRTIQKPV (165 aa)). A disordered region spans residues 593–615 (TSLSERVGSSRKKVSRDTNTDPA). The region spanning 616–651 (NRDIVELQKEMLLCAENLDFERAVEIRNEIKRLTAP) is the UVR domain.

This sequence belongs to the UvrB family. As to quaternary structure, forms a heterotetramer with UvrA during the search for lesions. Interacts with UvrC in an incision complex.

The protein localises to the cytoplasm. The UvrABC repair system catalyzes the recognition and processing of DNA lesions. A damage recognition complex composed of 2 UvrA and 2 UvrB subunits scans DNA for abnormalities. Upon binding of the UvrA(2)B(2) complex to a putative damaged site, the DNA wraps around one UvrB monomer. DNA wrap is dependent on ATP binding by UvrB and probably causes local melting of the DNA helix, facilitating insertion of UvrB beta-hairpin between the DNA strands. Then UvrB probes one DNA strand for the presence of a lesion. If a lesion is found the UvrA subunits dissociate and the UvrB-DNA preincision complex is formed. This complex is subsequently bound by UvrC and the second UvrB is released. If no lesion is found, the DNA wraps around the other UvrB subunit that will check the other stand for damage. This is UvrABC system protein B from Anaplasma marginale (strain Florida).